Reading from the N-terminus, the 822-residue chain is Pentatricopeptide repeat-containing protein At2g18940, chloroplastic (822 aa).

The segment at 1–42 (MDGALFPHKPPYPIQSKRPPPSQSSNQSIKFSSATLHLPPPS) is disordered. Residues 1 to 77 (MDGALFPHKP…SAAARFPSLE (77 aa)) constitute a chloroplast transit peptide. A compositionally biased stretch (pro residues) spans 8–22 (HKPPYPIQSKRPPPS). A compositionally biased stretch (low complexity) spans 23–37 (QSSNQSIKFSSATLH). PPR repeat units lie at residues 209–243 (DVRAYTTILHAYSRTGKYEKAIDLFERMKEMGPSP), 244–279 (TLVTYNVILDVFGKMGRSWRKILGVLDEMRSKGLKF), 280–314 (DEFTCSTVLSACAREGLLREAKEFFAELKSCGYEP), 315–349 (GTVTYNALLQVFGKAGVYTEALSVLKEMEENSCPA), 350–384 (DSVTYNELVAAYVRAGFSKEAAGVIEMMTKKGVMP), 385–419 (NAITYTTVIDAYGKAGKEDEALKLFYSMKEAGCVP), 420–454 (NTCTYNAVLSLLGKKSRSNEMIKMLCDMKSNGCSP), 455–489 (NRATWNTMLALCGNKGMDKFVNRVFREMKSCGFEP), 490–524 (DRDTFNTLISAYGRCGSEVDASKMYGEMTRAGFNA), 525–559 (CVTTYNALLNALARKGDWRSGENVISDMKSKGFKP), 560–594 (TETSYSLMLQCYAKGGNYLGIERIENRIKEGQIFP), 595–629 (SWMLLRTLLLANFKCRALAGSERAFTLFKKHGYKP), 630–664 (DMVIFNSMLSIFTRNNMYDQAEGILESIREDGLSP), 665–699 (DLVTYNSLMDMYVRRGECWKAEEILKTLEKSQLKP), 700–734 (DLVSYNTVIKGFCRRGLMQEAVRMLSEMTERGIRP), 735–769 (CIFTYNTFVSGYTAMGMFAEIEDVIECMAKNDCRP), and 770–800 (NELTFKMVVDGYCRAGKYSEAMDFVSKIKTF).

This sequence belongs to the PPR family. P subfamily.

The protein localises to the plastid. Its subcellular location is the chloroplast. The protein is Pentatricopeptide repeat-containing protein At2g18940, chloroplastic of Arabidopsis thaliana (Mouse-ear cress).